We begin with the raw amino-acid sequence, 87 residues long: Large ribosomal subunit protein bL31B (87 aa).

Belongs to the bacterial ribosomal protein bL31 family. Type B subfamily. Part of the 50S ribosomal subunit.

The polypeptide is Large ribosomal subunit protein bL31B (Latilactobacillus sakei subsp. sakei (strain 23K) (Lactobacillus sakei subsp. sakei)).